Reading from the N-terminus, the 287-residue chain is Alpha-ketoglutarate-dependent 2,4-dichlorophenoxyacetate dioxygenase (287 aa).

Residue tryptophan 113 is modified to 3-hydroxytryptophan; by autocatalysis. 2 residues coordinate Fe cation: histidine 114 and aspartate 116. 2-oxoglutarate contacts are provided by threonine 141 and tryptophan 248. A Fe cation-binding site is contributed by histidine 263. Positions 274 and 278 each coordinate 2-oxoglutarate.

It belongs to the TfdA dioxygenase family. Requires Fe(2+) as cofactor. In terms of processing, hydroxylated on Trp-113; inactivates the enzyme.

It catalyses the reaction (2,4-dichlorophenoxy)acetate + 2-oxoglutarate + O2 = 2,4-dichlorophenol + glyoxylate + succinate + CO2. Its pathway is xenobiotic degradation; (2,4-dichlorophenoxy)acetate degradation. With respect to regulation, activated by ascorbate. Involved in degradation of the herbicide 2,4-dichlorophenoxyacetic acid (2,4-D). Is also able to degrade 2-methyl-4-chlorophenoxyacetic acid and 3-chlorobenzoic acid. The chain is Alpha-ketoglutarate-dependent 2,4-dichlorophenoxyacetate dioxygenase (tfdA) from Cupriavidus pinatubonensis (strain JMP 134 / LMG 1197) (Cupriavidus necator (strain JMP 134)).